A 255-amino-acid polypeptide reads, in one-letter code: Probable iron chelatin transport ATP-binding protein jhp_0821 (255 aa).

The ABC transporter domain occupies 3-240 (LEVKNLSFKY…HNLSALYDTP (238 aa)). 35-42 (APNGSGKT) lines the ATP pocket.

Belongs to the ABC transporter superfamily.

The protein resides in the cell inner membrane. In terms of biological role, part of a binding-protein-dependent transport system for an iron chelatin. Probably responsible for energy coupling to the transport system (Potential). The sequence is that of Probable iron chelatin transport ATP-binding protein jhp_0821 from Helicobacter pylori (strain J99 / ATCC 700824) (Campylobacter pylori J99).